The sequence spans 341 residues: Ketol-acid reductoisomerase (NADP(+)) (341 aa).

Residues 2–182 (TDIVYDKDAD…GGLRAGGIRT (181 aa)) form the KARI N-terminal Rossmann domain. NADP(+)-binding positions include 25–28 (YGSQ), lysine 48, serine 51, serine 53, and 83–86 (DQHQ). The active site involves histidine 108. An NADP(+)-binding site is contributed by glycine 134. The KARI C-terminal knotted domain maps to 183-328 (TFTEETETDL…RELRKLFAWN (146 aa)). Residues aspartate 191, glutamate 195, glutamate 227, and glutamate 231 each contribute to the Mg(2+) site. Residue serine 252 participates in substrate binding.

Belongs to the ketol-acid reductoisomerase family. Mg(2+) serves as cofactor.

It catalyses the reaction (2R)-2,3-dihydroxy-3-methylbutanoate + NADP(+) = (2S)-2-acetolactate + NADPH + H(+). The enzyme catalyses (2R,3R)-2,3-dihydroxy-3-methylpentanoate + NADP(+) = (S)-2-ethyl-2-hydroxy-3-oxobutanoate + NADPH + H(+). Its pathway is amino-acid biosynthesis; L-isoleucine biosynthesis; L-isoleucine from 2-oxobutanoate: step 2/4. It participates in amino-acid biosynthesis; L-valine biosynthesis; L-valine from pyruvate: step 2/4. Involved in the biosynthesis of branched-chain amino acids (BCAA). Catalyzes an alkyl-migration followed by a ketol-acid reduction of (S)-2-acetolactate (S2AL) to yield (R)-2,3-dihydroxy-isovalerate. In the isomerase reaction, S2AL is rearranged via a Mg-dependent methyl migration to produce 3-hydroxy-3-methyl-2-ketobutyrate (HMKB). In the reductase reaction, this 2-ketoacid undergoes a metal-dependent reduction by NADPH to yield (R)-2,3-dihydroxy-isovalerate. The sequence is that of Ketol-acid reductoisomerase (NADP(+)) from Clavibacter michiganensis subsp. michiganensis (strain NCPPB 382).